The chain runs to 122 residues: Anti-sigma-F factor antagonist RsfB (122 aa).

Residues 7-115 (ITVTVADHNG…STLHDALTGV (109 aa)) enclose the STAS domain. The residue at position 61 (Ser-61) is a Phosphoserine.

The protein belongs to the anti-sigma-factor antagonist family. Interacts with anti-sigma-F factor RsbW (UsfX). Its phosphorylation may prevent this interaction. Post-translationally, putative phosphorylation on Ser-61 may prevent interaction with RsbW.

Its function is as follows. Positive regulator of sigma-F (SigF) activity. Binds to anti-sigma-F factor RsbW (UsfX) preventing its binding to SigF, thus activating transcription. In Mycobacterium tuberculosis (strain CDC 1551 / Oshkosh), this protein is Anti-sigma-F factor antagonist RsfB (rsfB).